A 390-amino-acid polypeptide reads, in one-letter code: Dual-specificity RNA methyltransferase RlmN (390 aa).

The active-site Proton acceptor is the glutamate 110. Positions 116-355 (EADRATLCVS…VIIRKTRGDD (240 aa)) constitute a Radical SAM core domain. Cysteines 123 and 360 form a disulfide. The [4Fe-4S] cluster site is built by cysteine 130, cysteine 134, and cysteine 137. S-adenosyl-L-methionine contacts are provided by residues 184 to 185 (GE), serine 216, 238 to 240 (SLH), and asparagine 317. The active-site S-methylcysteine intermediate is the cysteine 360.

This sequence belongs to the radical SAM superfamily. RlmN family. It depends on [4Fe-4S] cluster as a cofactor.

It localises to the cytoplasm. It catalyses the reaction adenosine(2503) in 23S rRNA + 2 reduced [2Fe-2S]-[ferredoxin] + 2 S-adenosyl-L-methionine = 2-methyladenosine(2503) in 23S rRNA + 5'-deoxyadenosine + L-methionine + 2 oxidized [2Fe-2S]-[ferredoxin] + S-adenosyl-L-homocysteine. It carries out the reaction adenosine(37) in tRNA + 2 reduced [2Fe-2S]-[ferredoxin] + 2 S-adenosyl-L-methionine = 2-methyladenosine(37) in tRNA + 5'-deoxyadenosine + L-methionine + 2 oxidized [2Fe-2S]-[ferredoxin] + S-adenosyl-L-homocysteine. Specifically methylates position 2 of adenine 2503 in 23S rRNA and position 2 of adenine 37 in tRNAs. m2A2503 modification seems to play a crucial role in the proofreading step occurring at the peptidyl transferase center and thus would serve to optimize ribosomal fidelity. The chain is Dual-specificity RNA methyltransferase RlmN from Haemophilus influenzae (strain ATCC 51907 / DSM 11121 / KW20 / Rd).